Consider the following 391-residue polypeptide: Nucleosome assembly protein 1-like 1 (391 aa).

Met-1 bears the N-acetylmethionine mark. Positions 1 to 10 (MADIDNKEQS) are enriched in basic and acidic residues. The interval 1 to 32 (MADIDNKEQSELDQDLDDVEEVEEEETGEETK) is disordered. Ala-2 bears the N-acetylalanine mark. Position 10 is a phosphoserine (Ser-10). Acidic residues predominate over residues 11–28 (ELDQDLDDVEEVEEEETG). Thr-62 and Thr-64 each carry phosphothreonine. The residue at position 69 (Ser-69) is a Phosphoserine. Lys-116 carries the N6-acetyllysine modification. The NAP1L motif signature appears at 125 to 150 (YEPTEEECEWKPDEEDEISEELKEKA). Positions 132-143 (CEWKPDEEDEIS) are enriched in acidic residues. Residues 132-163 (CEWKPDEEDEISEELKEKAKIEDEKKDEEKED) are disordered. The residue at position 143 (Ser-143) is a Phosphoserine. Residues 144–163 (EELKEKAKIEDEKKDEEKED) show a composition bias toward basic and acidic residues. Positions 273–279 (IKKKQKH) match the Nuclear localization signal motif. Acidic residues predominate over residues 346–376 (AIEDDDDDYDEEGEEADEEGEEEGDEENDPD). Residues 346–391 (AIEDDDDDYDEEGEEADEEGEEEGDEENDPDYDPKKDQNPAECKQQ) are disordered. Positions 377–391 (YDPKKDQNPAECKQQ) are enriched in basic and acidic residues. Cys-388 is modified (cysteine methyl ester). A lipid anchor (S-farnesyl cysteine) is attached at Cys-388. The propeptide at 389–391 (KQQ) is removed in mature form.

The protein belongs to the nucleosome assembly protein (NAP) family. Homodimer. The dimer binds strongly and sequentially to single and double H2A-H2B heterodimers. Interacts with ERCC6; this interaction increases ERCC6 processivity. Interacts with RAD54. Interacts with SETD1A. As to quaternary structure, (Microbial infection) Interacts with human herpesvirus 8 protein LANA1 (via N-terminus); this interaction is required for LANA1-dependent DNA replication. In terms of assembly, (Microbial infection) Interacts with hepatitis virus protein NS5A (via C-terminus); this interaction sequesters NAP1L1 in the cytoplasm, blocking its nuclear translocation. (Microbial infection) Interacts with Chikungunya virus non-structural protein 3 (via C-terminus). Monoglycylated on glutamate residues. Cannot be polyglycylated due to the absence of functional TTLL10 in human. In terms of processing, polyglutamylated by TTLL4 on glutamate residues, resulting in polyglutamate chains on the gamma-carboxyl group. Both polyglutamylation and monoglycylation modifications can coexist on the same protein on adjacent residues, and lowering polyglycylation levels increases polyglutamylation, and reciprocally. In terms of tissue distribution, ubiquitously expressed.

The protein localises to the nucleus. The protein resides in the melanosome. It is found in the cytoplasm. Histone chaperone that plays a role in the nuclear import of H2A-H2B and nucleosome assembly. Also participates in several important DNA repair mechanisms: greatly enhances ERCC6-mediated chromatin remodeling which is essential for transcription-coupled nucleotide excision DNA repair. Also stimulates homologous recombination (HR) by RAD51 and RAD54 which is essential in mitotic DNA double strand break (DSB) repair. Plays a key role in the regulation of embryonic neurogenesis. Promotes the proliferation of neural progenitors and inhibits neuronal differentiation during cortical development. Regulates neurogenesis via the modulation of RASSF10; regulates RASSF10 expression by promoting SETD1A-mediated H3K4 methylation at the RASSF10 promoter. Its function is as follows. (Microbial infection) Positively regulates Epstein-Barr virus reactivation in epithelial cells through the induction of viral BZLF1 expression. In terms of biological role, (Microbial infection) Together with human herpesvirus 8 protein LANA1, assists the proper assembly of the nucleosome on the replicated viral DNA. The chain is Nucleosome assembly protein 1-like 1 (NAP1L1) from Homo sapiens (Human).